The primary structure comprises 1342 residues: DNA-directed RNA polymerase subunit beta (1342 aa).

It belongs to the RNA polymerase beta chain family. As to quaternary structure, the RNAP catalytic core consists of 2 alpha, 1 beta, 1 beta' and 1 omega subunit. When a sigma factor is associated with the core the holoenzyme is formed, which can initiate transcription.

The catalysed reaction is RNA(n) + a ribonucleoside 5'-triphosphate = RNA(n+1) + diphosphate. Its function is as follows. DNA-dependent RNA polymerase catalyzes the transcription of DNA into RNA using the four ribonucleoside triphosphates as substrates. The polypeptide is DNA-directed RNA polymerase subunit beta (Wigglesworthia glossinidia brevipalpis).